The chain runs to 326 residues: D-amino-acid oxidase (326 aa).

Positions 14, 15, 16, 36, 44, 48, 49, 50, and 157 each coordinate FAD. D-proline contacts are provided by Tyr219 and Arg274. Positions 219 and 274 each coordinate D-serine. The FAD site is built by Arg274, Gly299, Gly300, Gly302, and Thr304. A D-proline-binding site is contributed by Gly300. Gly300 provides a ligand contact to D-serine.

It belongs to the DAMOX/DASOX family. Homodimer. It depends on FAD as a cofactor.

Its subcellular location is the cytoplasm. It localises to the secreted. The protein localises to the cell wall. It carries out the reaction a D-alpha-amino acid + O2 + H2O = a 2-oxocarboxylate + H2O2 + NH4(+). The enzyme catalyses D-phenylalanine + O2 + H2O = 3-phenylpyruvate + H2O2 + NH4(+). The catalysed reaction is D-lysine + O2 + H2O = 6-amino-2-oxohexanoate + H2O2 + NH4(+). It catalyses the reaction D-methionine + O2 + H2O = 4-methylsulfanyl-2-oxobutanoate + H2O2 + NH4(+). It carries out the reaction D-arginine + O2 + H2O = 5-guanidino-2-oxopentanoate + H2O2 + NH4(+). The enzyme catalyses D-ornithine + O2 + H2O = 5-amino-2-oxopentanoate + H2O2 + NH4(+). The catalysed reaction is D-leucine + O2 + H2O = 4-methyl-2-oxopentanoate + H2O2 + NH4(+). It catalyses the reaction D-alanine + O2 + H2O = pyruvate + H2O2 + NH4(+). It carries out the reaction D-valine + O2 + H2O = 3-methyl-2-oxobutanoate + H2O2 + NH4(+). The enzyme catalyses D-histidine + O2 + H2O = 3-(imidazol-5-yl)pyruvate + H2O2 + NH4(+). Its function is as follows. Catalyzes the oxidative deamination of D-amino acids with broad substrate specificity. The polypeptide is D-amino-acid oxidase (Glutamicibacter protophormiae (Brevibacterium protophormiae)).